Here is a 676-residue protein sequence, read N- to C-terminus: tRNA 5-methylaminomethyl-2-thiouridine biosynthesis bifunctional protein MnmC (676 aa).

The interval 1–241 is tRNA (mnm(5)s(2)U34)-methyltransferase; the sequence is MFTVTPAKIY…KRECLCGIKN (241 aa). The segment at 268–676 is FAD-dependent cmnm(5)s(2)U34 oxidoreductase; it reads IGGGIASLFT…RKLLKGTEIK (409 aa).

In the N-terminal section; belongs to the methyltransferase superfamily. tRNA (mnm(5)s(2)U34)-methyltransferase family. It in the C-terminal section; belongs to the DAO family. The cofactor is FAD.

It localises to the cytoplasm. It catalyses the reaction 5-aminomethyl-2-thiouridine(34) in tRNA + S-adenosyl-L-methionine = 5-methylaminomethyl-2-thiouridine(34) in tRNA + S-adenosyl-L-homocysteine + H(+). Functionally, catalyzes the last two steps in the biosynthesis of 5-methylaminomethyl-2-thiouridine (mnm(5)s(2)U) at the wobble position (U34) in tRNA. Catalyzes the FAD-dependent demodification of cmnm(5)s(2)U34 to nm(5)s(2)U34, followed by the transfer of a methyl group from S-adenosyl-L-methionine to nm(5)s(2)U34, to form mnm(5)s(2)U34. This chain is tRNA 5-methylaminomethyl-2-thiouridine biosynthesis bifunctional protein MnmC, found in Histophilus somni (strain 129Pt) (Haemophilus somnus).